Reading from the N-terminus, the 230-residue chain is MYTNMGYLTSSFIFFFLALVTYTYAATIEVRNNCPYTVWAASTPIGGGRRLDRGQTWVINAPRGTKMARIWGRTNCNFNGAGRGSCQTGDCGGVLHCTGWGKPPNTLAEYALDQFSNLDFWDISLVDGFNIPMTFAPTNPSGGKCHAIHCTANINGECPSPLRVPGGCNNPCTTFGGQQYCCTQGPCGPTKFSRFFKQRCPNAYSYPQDDPTSLFTCPSGSTNYRVVFCP.

The first 25 residues, 1 to 25 (MYTNMGYLTSSFIFFFLALVTYTYA), serve as a signal peptide directing secretion. 8 cysteine pairs are disulfide-bonded: cysteine 34–cysteine 229, cysteine 76–cysteine 86, cysteine 91–cysteine 97, cysteine 145–cysteine 217, cysteine 150–cysteine 200, cysteine 158–cysteine 168, cysteine 172–cysteine 181, and cysteine 182–cysteine 187.

Belongs to the thaumatin family.

Its subcellular location is the secreted. The protein localises to the vacuole. It catalyses the reaction Endohydrolysis of (1-&gt;3)- or (1-&gt;4)-linkages in beta-D-glucans when the glucose residue whose reducing group is involved in the linkage to be hydrolyzed is itself substituted at C-3.. Antifungal protein. May bind to beta-glucans and have beta-1,3-D-glucanase activity. The protein is Osmotin-like protein PR-5x of Solanum lycopersicum (Tomato).